The primary structure comprises 268 residues: Tryptophan synthase alpha chain (268 aa).

Active-site proton acceptor residues include Glu49 and Asp60.

It belongs to the TrpA family. Tetramer of two alpha and two beta chains.

It catalyses the reaction (1S,2R)-1-C-(indol-3-yl)glycerol 3-phosphate + L-serine = D-glyceraldehyde 3-phosphate + L-tryptophan + H2O. Its pathway is amino-acid biosynthesis; L-tryptophan biosynthesis; L-tryptophan from chorismate: step 5/5. The alpha subunit is responsible for the aldol cleavage of indoleglycerol phosphate to indole and glyceraldehyde 3-phosphate. This chain is Tryptophan synthase alpha chain, found in Escherichia coli O6:H1 (strain CFT073 / ATCC 700928 / UPEC).